A 314-amino-acid polypeptide reads, in one-letter code: Trihelix transcription factor ASR3 (314 aa).

The tract at residues 1 to 34 (MALEQLGLGVSAVDGGENSSAPSNDGGDDGVKTA) is disordered. The Myb-like domain maps to 38–104 (RWTRQEILVL…QCRKRWSNLA (67 aa)). The Nuclear localization signal motif lies at 84-91 (CKRHGVNR). The EAR 1 signature appears at 161–165 (LSLGL). Thr189 carries the post-translational modification Phosphothreonine; by MAPK4. The segment at 207–255 (CVADQGRVKEKQPEAANVEGGSTSQEERKRKRTSFGEKEEEEEEGETKK) is disordered. The short motif at 280–284 (LNLKL) is the EAR 2 element.

As to quaternary structure, homodimer. Interacts directly with MPK4. Phosphorylated on Thr-189 by MPK4 in response to microbe-associated molecular patterns (MAMPs, e.g. flg22, elf18, chitin, and LPS). This phosphorylation enhances DNA-binding and thus negatively regulates immune gene expression.

The protein localises to the nucleus. Transcriptional repressor that binds DNA and plays a negative role in regulating microbe-associated molecular patterns-(MAMPs, e.g. flg22, elf18, chitin, and LPS) triggered immunity (PTI) by negatively regulating immune gene expression. The polypeptide is Trihelix transcription factor ASR3 (Arabidopsis thaliana (Mouse-ear cress)).